The chain runs to 126 residues: Penicillinase repressor (126 aa).

The H-T-H motif DNA-binding region spans E7–S71. Residues K74–K126 form an important for dimerization region.

The protein belongs to the BlaI transcriptional regulatory family. As to quaternary structure, homodimer. Post-translationally, upon exposure to beta-lactams, the protease BlaR1 is activated and cleaves BlaI at a single site. This proteolytic cleavage impairs dimerization and abolishes repressor activity.

It localises to the cytoplasm. Its function is as follows. Transcriptional repressor that constitutively blocks expression of beta-lactamase. Binds DNA as a dimer. In Staphylococcus aureus, this protein is Penicillinase repressor (blaI).